The sequence spans 259 residues: Probable dihydroorotate dehydrogenase B (NAD(+)), electron transfer subunit (259 aa).

The FAD-binding FR-type domain occupies 1–89 (MLPLNATIVQ…RGPFGKGFSL (89 aa)). Residues C211, C216, C219, and C229 each coordinate [2Fe-2S] cluster.

It belongs to the PyrK family. In terms of assembly, heterotetramer of 2 PyrK and 2 PyrD type B subunits. The cofactor is [2Fe-2S] cluster. FAD serves as cofactor.

It functions in the pathway pyrimidine metabolism; UMP biosynthesis via de novo pathway; orotate from (S)-dihydroorotate (NAD(+) route): step 1/1. Responsible for channeling the electrons from the oxidation of dihydroorotate from the FMN redox center in the PyrD type B subunit to the ultimate electron acceptor NAD(+). The chain is Probable dihydroorotate dehydrogenase B (NAD(+)), electron transfer subunit from Methanosarcina barkeri (strain Fusaro / DSM 804).